A 413-amino-acid polypeptide reads, in one-letter code: Aspartate aminotransferase, cytoplasmic (413 aa).

Gly39 and Trp141 together coordinate L-aspartate. Ser149 carries the post-translational modification Phosphoserine. Asn195 provides a ligand contact to L-aspartate. Lys259 carries the N6-(pyridoxal phosphate)lysine modification. L-aspartate is bound at residue Arg387.

Belongs to the class-I pyridoxal-phosphate-dependent aminotransferase family. Homodimer. Pyridoxal 5'-phosphate is required as a cofactor.

It localises to the cytoplasm. It carries out the reaction L-aspartate + 2-oxoglutarate = oxaloacetate + L-glutamate. It catalyses the reaction L-cysteine + 2-oxoglutarate = 2-oxo-3-sulfanylpropanoate + L-glutamate. The catalysed reaction is (2S)-2-aminobutanoate + 2-oxoglutarate = 2-oxobutanoate + L-glutamate. The enzyme catalyses 3-sulfino-L-alanine + 2-oxoglutarate = 3-sulfinopyruvate + L-glutamate. Biosynthesis of L-glutamate from L-aspartate or L-cysteine. Important regulator of levels of glutamate, the major excitatory neurotransmitter of the vertebrate central nervous system. Acts as a scavenger of glutamate in brain neuroprotection. The aspartate aminotransferase activity is involved in hepatic glucose synthesis during development and in adipocyte glyceroneogenesis. Using L-cysteine as substrate, regulates levels of mercaptopyruvate, an important source of hydrogen sulfide. Mercaptopyruvate is converted into H(2)S via the action of 3-mercaptopyruvate sulfurtransferase (3MST). Hydrogen sulfide is an important synaptic modulator and neuroprotectant in the brain. The sequence is that of Aspartate aminotransferase, cytoplasmic from Macaca fascicularis (Crab-eating macaque).